The following is a 1203-amino-acid chain: DNA-directed RNA polymerase subunit beta' (1203 aa).

4 residues coordinate Zn(2+): Cys-60, Cys-62, Cys-75, and Cys-78. Mg(2+) contacts are provided by Asp-449, Asp-451, and Asp-453. Residues Cys-818, Cys-892, Cys-899, and Cys-902 each contribute to the Zn(2+) site.

Belongs to the RNA polymerase beta' chain family. In terms of assembly, the RNAP catalytic core consists of 2 alpha, 1 beta, 1 beta' and 1 omega subunit. When a sigma factor is associated with the core the holoenzyme is formed, which can initiate transcription. Mg(2+) is required as a cofactor. It depends on Zn(2+) as a cofactor.

The enzyme catalyses RNA(n) + a ribonucleoside 5'-triphosphate = RNA(n+1) + diphosphate. Functionally, DNA-dependent RNA polymerase catalyzes the transcription of DNA into RNA using the four ribonucleoside triphosphates as substrates. In Bacillus thuringiensis (strain Al Hakam), this protein is DNA-directed RNA polymerase subunit beta'.